The primary structure comprises 133 residues: Small ribosomal subunit protein eS24y (133 aa).

The segment at 104–133 (KSRKQIKERKNRAKKIRGVKKTKAGDTKKK) is disordered. The span at 109-125 (IKERKNRAKKIRGVKKT) shows a compositional bias: basic residues.

This sequence belongs to the eukaryotic ribosomal protein eS24 family.

The chain is Small ribosomal subunit protein eS24y (RPS24B) from Arabidopsis thaliana (Mouse-ear cress).